A 185-amino-acid polypeptide reads, in one-letter code: Potassium-transporting ATPase KdpC subunit (185 aa).

A helical transmembrane segment spans residues 14–34; the sequence is ALSLLTGVAYPLALTGIAAVI.

The protein belongs to the KdpC family. As to quaternary structure, the system is composed of three essential subunits: KdpA, KdpB and KdpC.

The protein resides in the cell inner membrane. Its function is as follows. Part of the high-affinity ATP-driven potassium transport (or Kdp) system, which catalyzes the hydrolysis of ATP coupled with the electrogenic transport of potassium into the cytoplasm. This subunit acts as a catalytic chaperone that increases the ATP-binding affinity of the ATP-hydrolyzing subunit KdpB by the formation of a transient KdpB/KdpC/ATP ternary complex. The sequence is that of Potassium-transporting ATPase KdpC subunit from Cereibacter sphaeroides (strain ATCC 17023 / DSM 158 / JCM 6121 / CCUG 31486 / LMG 2827 / NBRC 12203 / NCIMB 8253 / ATH 2.4.1.) (Rhodobacter sphaeroides).